Consider the following 335-residue polypeptide: Glucokinase (335 aa).

11-16 lines the ATP pocket; it reads ADIGGT.

This sequence belongs to the bacterial glucokinase family.

The protein resides in the cytoplasm. The enzyme catalyses D-glucose + ATP = D-glucose 6-phosphate + ADP + H(+). The protein is Glucokinase of Stenotrophomonas maltophilia (strain K279a).